The sequence spans 126 residues: Small ribosomal subunit protein uS12 (126 aa).

The interval 1-28 (MPTINQLVRKGRQSETTKSKSPALQDCP) is disordered. Asp-89 is subject to 3-methylthioaspartic acid. The tract at residues 103–126 (DTQGVKDRKQARSKYGAKRAKAGK) is disordered. Over residues 113–126 (ARSKYGAKRAKAGK) the composition is skewed to basic residues.

It belongs to the universal ribosomal protein uS12 family. In terms of assembly, part of the 30S ribosomal subunit. Contacts proteins S8 and S17. May interact with IF1 in the 30S initiation complex.

Functionally, with S4 and S5 plays an important role in translational accuracy. Interacts with and stabilizes bases of the 16S rRNA that are involved in tRNA selection in the A site and with the mRNA backbone. Located at the interface of the 30S and 50S subunits, it traverses the body of the 30S subunit contacting proteins on the other side and probably holding the rRNA structure together. The combined cluster of proteins S8, S12 and S17 appears to hold together the shoulder and platform of the 30S subunit. This Paraburkholderia phytofirmans (strain DSM 17436 / LMG 22146 / PsJN) (Burkholderia phytofirmans) protein is Small ribosomal subunit protein uS12.